Reading from the N-terminus, the 187-residue chain is UPF0301 protein ESA_00394 (187 aa).

This sequence belongs to the UPF0301 (AlgH) family.

This is UPF0301 protein ESA_00394 from Cronobacter sakazakii (strain ATCC BAA-894) (Enterobacter sakazakii).